A 128-amino-acid chain; its full sequence is Large ribosomal subunit protein eL8 (128 aa).

The protein belongs to the eukaryotic ribosomal protein eL8 family. Part of the 50S ribosomal subunit. Probably part of the RNase P complex.

The protein resides in the cytoplasm. Its function is as follows. Multifunctional RNA-binding protein that recognizes the K-turn motif in ribosomal RNA, the RNA component of RNase P, box H/ACA, box C/D and box C'/D' sRNAs. The polypeptide is Large ribosomal subunit protein eL8 (Staphylothermus marinus (strain ATCC 43588 / DSM 3639 / JCM 9404 / F1)).